Consider the following 275-residue polypeptide: N-(5'-phosphoribosyl)anthranilate isomerase 2, chloroplastic (275 aa).

Residues 1-32 constitute a chloroplast transit peptide; the sequence is MSTGISTDLHVHFGALNFSKTYKSGLSNRTVS.

This sequence belongs to the TrpF family. As to expression, expressed in roots and shoots.

The protein localises to the plastid. Its subcellular location is the chloroplast. The catalysed reaction is N-(5-phospho-beta-D-ribosyl)anthranilate = 1-(2-carboxyphenylamino)-1-deoxy-D-ribulose 5-phosphate. It participates in amino-acid biosynthesis; L-tryptophan biosynthesis; L-tryptophan from chorismate: step 3/5. The sequence is that of N-(5'-phosphoribosyl)anthranilate isomerase 2, chloroplastic (PAI2) from Arabidopsis thaliana (Mouse-ear cress).